A 397-amino-acid chain; its full sequence is P2X purinoceptor 3 (397 aa).

Residues Met1–Ser20 lie on the Cytoplasmic side of the membrane. Residues Trp21–Phe43 traverse the membrane as a helical segment. Residues Leu44–Ile322 are Extracellular-facing. The ATP site is built by Lys63 and Lys65. 3 disulfides stabilise this stretch: Cys107-Cys153, Cys116-Cys137, and Cys122-Cys147. Glu111 provides a ligand contact to Mg(2+). The N-linked (GlcNAc...) asparagine glycan is linked to Asn139. A Mg(2+)-binding site is contributed by Asp158. Residue Asp158 coordinates Ca(2+). Residue Asn170 is glycosylated (N-linked (GlcNAc...) asparagine). Thr172 provides a ligand contact to ATP. N-linked (GlcNAc...) asparagine glycosylation occurs at Asn194. 2 disulfides stabilise this stretch: Cys203/Cys213 and Cys247/Cys256. Residues Ser275, Asn279, and Arg281 each contribute to the ATP site. The N-linked (GlcNAc...) asparagine glycan is linked to Asn290. Lys299 serves as a coordination point for ATP. The helical transmembrane segment at Ile323 to Ile341 threads the bilayer. Residues Ile342–His397 lie on the Cytoplasmic side of the membrane.

It belongs to the P2X receptor family. As to quaternary structure, homotrimer. Forms heterotrimer with P2RX2. Heterotrimeric P2RX2/3 has a ligand dose-response profile that is distinct from either homotrimeric P2RX2 or P2RX3. As to expression, selectively expressed in sensory ganglia.

Its subcellular location is the cell membrane. The enzyme catalyses Ca(2+)(in) = Ca(2+)(out). It carries out the reaction Na(+)(in) = Na(+)(out). Has high sensitivity to ATP. Fast activation by external ATP. Exhibits rapid desensitization. Sensitives to the ATP agonist:alpha/beta-methylene-ATP. Subject to allosteric inhibition by AF-219. Mg(2+) and Ca(2+) slow deactivation of P2RX3. Its function is as follows. Extracellular ATP-activated non-selective cation channel. Plays particularly important role in sensory neurons where its activation is critical for gustatory, nociceptive responses, visceral reflexes and sensory hypersensitization. This chain is P2X purinoceptor 3 (P2rx3), found in Rattus norvegicus (Rat).